Consider the following 1119-residue polypeptide: Putative transcription factor SEF1 (1119 aa).

Disordered stretches follow at residues 1–70 and 86–105; these read MGDP…TQSR and QNGE…SKGK. Residues 47-70 are compositionally biased toward polar residues; the sequence is LHTQQSYYGNGTDGASESALTQSR. Positions 118–148 form a DNA-binding region, zn(2)-C6 fungal-type; that stretch reads CTHCRQHKIKCNASEKFPAPCSRCERMGLHC. Disordered stretches follow at residues 236–290, 306–335, 894–913, 926–962, and 994–1018; these read QLLQ…PANT, SQQI…SSKQ, ASSS…TDTN, KKSS…AHNT, and SADS…PDTN. Low complexity predominate over residues 243 to 260; sequence TTTTNPTTSSNSKVVTPT. The segment covering 261–288 has biased composition (polar residues); it reads GSDHSPASHNGGSLSSGKPQLLNDSVPA. Over residues 306–322 the composition is skewed to low complexity; sequence SQQISSSSPQNSSPTTT. Composition is skewed to polar residues over residues 323–335, 902–913, and 931–942; these read GHSP…SSKQ, RLNADNPTTDTN, and SSDTPTNKPKFN. Low complexity predominate over residues 943 to 954; the sequence is STSSIPTATPTS.

The protein localises to the nucleus. Its function is as follows. Putative transcription factor. Suppresses the lethal phenotype of RPM2 deletion. This chain is Putative transcription factor SEF1 (SEF1), found in Kluyveromyces lactis (strain ATCC 8585 / CBS 2359 / DSM 70799 / NBRC 1267 / NRRL Y-1140 / WM37) (Yeast).